An 800-amino-acid chain; its full sequence is Phosphoinositide 3-kinase adapter protein 1 (800 aa).

Positions 8–145 constitute a TIR domain; it reads GGYDVLILYA…AVKKAISEDS (138 aa). Residues 10-144 form a necessary and sufficient to mediate inhibition of NF-kappa-B downstream of activated TLRs region; that stretch reads YDVLILYASD…EAVKKAISED (135 aa). A DBB domain is found at 185–321; it reads VQPDHIRCGV…NIPASGLHLF (137 aa). Tyr266 is modified (phosphotyrosine). Tyr423, Tyr448, and Tyr463 each carry phosphotyrosine; by SYK. A disordered region spans residues 527 to 548; the sequence is EMASRPPVPVPRPESSSPQPDN. Positions 643–663 form a coiled coil; that stretch reads QQENLKRLRDSITRRQMEKQK. Basic and acidic residues predominate over residues 702–713; the sequence is PKKELKRGDWKT. A disordered region spans residues 702–800; sequence PKKELKRGDW…YPPPVPPRGR (99 aa). Over residues 714 to 737 the composition is skewed to low complexity; the sequence is ESTSSTTSSASNRSSTRSILSVSS. A compositionally biased stretch (polar residues) spans 749–759; it reads SEASRSRSPIP. 2 stretches are compositionally biased toward pro residues: residues 767–777 and 791–800; these read LPLPERPPRVP and YPPPVPPRGR.

In terms of assembly, homooligomer. Interacts (phosphorylated on tyrosine residues within YXXM motifs) with PIK3R1 (via SH2 domain); required for BCR- and TLR-mediated activation of phosphoinositide 3-kinase. In terms of processing, constitutively phosphorylated. Phosphorylated on tyrosine residues within the YXXM motifs by BTK and SYK. Isoform 1 and isoform 2 are phosphorylated on tyrosine residues, most likely within the YXXM motifs, via CD19 activation.

The protein localises to the cytoplasm. The protein resides in the cell membrane. Its function is as follows. Signaling adapter that contributes to B-cell development by linking B-cell receptor (BCR) signaling to the phosphoinositide 3-kinase (PI3K)-Akt signaling pathway. Has a complementary role to the BCR coreceptor CD19, coupling BCR and PI3K activation by providing a docking site for the PI3K subunit PIK3R1. Alternatively, links Toll-like receptor (TLR) signaling to PI3K activation, a process preventing excessive inflammatory cytokine production. Also involved in the activation of PI3K in natural killer cells. May be involved in the survival of mature B-cells via activation of REL. This chain is Phosphoinositide 3-kinase adapter protein 1 (PIK3AP1), found in Gallus gallus (Chicken).